The sequence spans 117 residues: Large ribosomal subunit protein uL18 (117 aa).

Belongs to the universal ribosomal protein uL18 family. Part of the 50S ribosomal subunit; part of the 5S rRNA/L5/L18/L25 subcomplex. Contacts the 5S and 23S rRNAs.

Its function is as follows. This is one of the proteins that bind and probably mediate the attachment of the 5S RNA into the large ribosomal subunit, where it forms part of the central protuberance. The polypeptide is Large ribosomal subunit protein uL18 (Photorhabdus laumondii subsp. laumondii (strain DSM 15139 / CIP 105565 / TT01) (Photorhabdus luminescens subsp. laumondii)).